Reading from the N-terminus, the 383-residue chain is Succinyl-diaminopimelate desuccinylase (383 aa).

Residue His-73 participates in Zn(2+) binding. Asp-75 is a catalytic residue. Zn(2+) is bound at residue Asp-107. Glu-141 serves as the catalytic Proton acceptor. Zn(2+) contacts are provided by Glu-142, Glu-170, and His-356.

Belongs to the peptidase M20A family. DapE subfamily. As to quaternary structure, homodimer. Zn(2+) serves as cofactor. Co(2+) is required as a cofactor.

It carries out the reaction N-succinyl-(2S,6S)-2,6-diaminopimelate + H2O = (2S,6S)-2,6-diaminopimelate + succinate. It functions in the pathway amino-acid biosynthesis; L-lysine biosynthesis via DAP pathway; LL-2,6-diaminopimelate from (S)-tetrahydrodipicolinate (succinylase route): step 3/3. Functionally, catalyzes the hydrolysis of N-succinyl-L,L-diaminopimelic acid (SDAP), forming succinate and LL-2,6-diaminopimelate (DAP), an intermediate involved in the bacterial biosynthesis of lysine and meso-diaminopimelic acid, an essential component of bacterial cell walls. This chain is Succinyl-diaminopimelate desuccinylase, found in Pseudomonas paraeruginosa (strain DSM 24068 / PA7) (Pseudomonas aeruginosa (strain PA7)).